The chain runs to 501 residues: 2,3-bisphosphoglycerate-independent phosphoglycerate mutase (501 aa).

Residues Asp-12 and Ser-62 each coordinate Mn(2+). Catalysis depends on Ser-62, which acts as the Phosphoserine intermediate. Substrate is bound by residues His-121, Arg-150–Asp-151, Arg-182, Arg-188, Arg-253–Arg-256, and Lys-323. The Mn(2+) site is built by Asp-390, His-394, Asp-431, His-432, and His-450.

This sequence belongs to the BPG-independent phosphoglycerate mutase family. In terms of assembly, monomer. Requires Mn(2+) as cofactor.

It carries out the reaction (2R)-2-phosphoglycerate = (2R)-3-phosphoglycerate. The protein operates within carbohydrate degradation; glycolysis; pyruvate from D-glyceraldehyde 3-phosphate: step 3/5. In terms of biological role, catalyzes the interconversion of 2-phosphoglycerate and 3-phosphoglycerate. The sequence is that of 2,3-bisphosphoglycerate-independent phosphoglycerate mutase from Ehrlichia canis (strain Jake).